Here is a 317-residue protein sequence, read N- to C-terminus: Cytochrome c biogenesis protein CcsA (317 aa).

Transmembrane regions (helical) follow at residues 17 to 37 (VVSI…IVGL), 44 to 64 (GMIV…IYSG), 71 to 91 (LYES…LPYL), 101 to 121 (ITSP…LTQI), 143 to 163 (MILS…LLVI), 223 to 243 (IISI…VWAN), 252 to 272 (WDPK…YLHI), and 284 to 304 (AIVA…INIL).

Belongs to the CcmF/CycK/Ccl1/NrfE/CcsA family. May interact with Ccs1.

It is found in the plastid. The protein resides in the chloroplast thylakoid membrane. Required during biogenesis of c-type cytochromes (cytochrome c6 and cytochrome f) at the step of heme attachment. The protein is Cytochrome c biogenesis protein CcsA of Pelargonium hortorum (Common geranium).